A 666-amino-acid polypeptide reads, in one-letter code: Probable potassium transport system protein Kup (666 aa).

12 helical membrane passes run 16–36 (GFII…LYTM), 58–78 (ISLI…LIAL), 100–120 (PWLI…GALT), 141–161 (IYQN…VLFG), 165–185 (FGTG…FSFL), 221–241 (IFIL…YSDL), 253–273 (WPFV…WILA), 292–312 (LTVY…QALI), 343–363 (LYIP…VLYF), 373–393 (YGLA…YYLI), 399–419 (PFLA…FFWA), and 424–444 (FMHG…VMFI).

It belongs to the HAK/KUP transporter (TC 2.A.72) family.

It is found in the cell membrane. The catalysed reaction is K(+)(in) + H(+)(in) = K(+)(out) + H(+)(out). Transport of potassium into the cell. Likely operates as a K(+):H(+) symporter. The polypeptide is Probable potassium transport system protein Kup (Streptococcus pyogenes serotype M18 (strain MGAS8232)).